The sequence spans 72 residues: PAMP-induced secreted peptide 1 (72 aa).

An N-terminal signal peptide occupies residues 1 to 30 (MRRVSWSTVLIVVVMVSLFFVEHVVVPAAA). A 4-hydroxyproline mark is found at proline 65 and proline 67.

Contains 4-hydroxyproline; hydroxylated on Pro-65 and Pro-67. In terms of tissue distribution, expressed in guard cells, hydathodes, leaf trichomes, and vascular tissues of leaves and roots.

It localises to the secreted. The protein localises to the extracellular space. It is found in the apoplast. Its function is as follows. Endogenous secreted peptide that acts as elicitor of immune response and positive regulator of defense response. Amplifies the immune response triggered by flg22, the active epitope of bacterial flagellin. Acts as a negative regulator of root growth. The protein is PAMP-induced secreted peptide 1 of Arabidopsis thaliana (Mouse-ear cress).